The primary structure comprises 369 residues: Small RNA 2'-O-methyltransferase (369 aa).

Residues Ser39, Asp57, and Ser93 each contribute to the S-adenosyl-L-methionine site. 4 residues coordinate Mg(2+): Glu111, Glu114, His115, and His161.

Belongs to the methyltransferase superfamily. HEN1 family. Mg(2+) serves as cofactor.

The protein localises to the cytoplasm. The catalysed reaction is small RNA 3'-end nucleotide + S-adenosyl-L-methionine = small RNA 3'-end 2'-O-methylnucleotide + S-adenosyl-L-homocysteine + H(+). Methyltransferase that adds a 2'-O-methyl group at the 3'-end of piRNAs, a class of 24 to 30 nucleotide RNAs that are generated by a Dicer-independent mechanism and are primarily derived from transposons and other repeated sequence elements. This probably protects the 3'-end of piRNAs from uridylation activity and subsequent degradation. Stabilization of piRNAs is essential for gametogenesis. The polypeptide is Small RNA 2'-O-methyltransferase (henmt1) (Xenopus tropicalis (Western clawed frog)).